Reading from the N-terminus, the 74-residue chain is RNA-binding protein Hfq (74 aa).

The region spanning 9–69 is the Sm domain; it reads DQFLNQLRKE…ISTFMPQKNV (61 aa).

This sequence belongs to the Hfq family. As to quaternary structure, homohexamer.

Functionally, RNA chaperone that binds small regulatory RNA (sRNAs) and mRNAs to facilitate mRNA translational regulation in response to envelope stress, environmental stress and changes in metabolite concentrations. Also binds with high specificity to tRNAs. In Bacillus cytotoxicus (strain DSM 22905 / CIP 110041 / 391-98 / NVH 391-98), this protein is RNA-binding protein Hfq.